Reading from the N-terminus, the 815-residue chain is DNA topoisomerase 1 (815 aa).

The region spanning 3 to 119 (KHLLIVESPA…QRIVFTEITP (117 aa)) is the Toprim domain. Mg(2+)-binding residues include Glu9 and Asp82. The Topo IA-type catalytic domain occupies 133–573 (ASDLVDAQQA…KFWVPFKELV (441 aa)). The tract at residues 167 to 172 (SAGRVQ) is interaction with DNA. Tyr308 serves as the catalytic O-(5'-phospho-DNA)-tyrosine intermediate. Residues 760–815 (GKPARKNFSTKKTATKNETRKQTTKKRTTDAKATKKVSDKPVKKQIKKRIAPNITE) form a disordered region. Over residues 774-801 (TKNETRKQTTKKRTTDAKATKKVSDKPV) the composition is skewed to basic and acidic residues.

It belongs to the type IA topoisomerase family. In terms of assembly, monomer. The cofactor is Mg(2+).

It catalyses the reaction ATP-independent breakage of single-stranded DNA, followed by passage and rejoining.. Functionally, releases the supercoiling and torsional tension of DNA, which is introduced during the DNA replication and transcription, by transiently cleaving and rejoining one strand of the DNA duplex. Introduces a single-strand break via transesterification at a target site in duplex DNA. The scissile phosphodiester is attacked by the catalytic tyrosine of the enzyme, resulting in the formation of a DNA-(5'-phosphotyrosyl)-enzyme intermediate and the expulsion of a 3'-OH DNA strand. The free DNA strand then undergoes passage around the unbroken strand, thus removing DNA supercoils. Finally, in the religation step, the DNA 3'-OH attacks the covalent intermediate to expel the active-site tyrosine and restore the DNA phosphodiester backbone. This chain is DNA topoisomerase 1, found in Xylella fastidiosa (strain 9a5c).